Reading from the N-terminus, the 142-residue chain is Large ribosomal subunit protein mL42 (142 aa).

A mitochondrion-targeting transit peptide spans 1 to 31 (MAAAVKWAISNRTIWKHLLPIQNGALSSACH).

It belongs to the mitochondrion-specific ribosomal protein mL42 family. As to quaternary structure, component of the mitochondrial ribosome large subunit (39S) which comprises a 16S rRNA and about 50 distinct proteins. Component of the mitochondrial ribosome small subunit (28S) which comprises a 12S rRNA and about 30 distinct proteins.

The protein localises to the mitochondrion. This is Large ribosomal subunit protein mL42 (Mrpl42) from Mus musculus (Mouse).